We begin with the raw amino-acid sequence, 456 residues long: Heme sensor protein HssS (456 aa).

2 helical membrane-spanning segments follow: residues 9 to 29 (IAIYTITVILFSALVSFLFAN) and 164 to 184 (TFLAVLLICLLGISITLVIAS). Residues 186–238 (YSIIKPIKILKQATERLMHGDFNSPIYQSRHDEIGTLQYRFEAMRQSLKQVDD) form the HAMP domain. Positions 246-456 (NVSHEIKTPL…TFTVTLPETN (211 aa)) constitute a Histidine kinase domain. Phosphohistidine; by autocatalysis is present on His249.

Autophosphorylated.

It localises to the cell membrane. It catalyses the reaction ATP + protein L-histidine = ADP + protein N-phospho-L-histidine.. In terms of biological role, member of the two-component regulatory system HssS/HssR involved in intracellular heme homeostasis and tempering of staphylococcal virulence. HssS functions as a heme sensor histidine kinase which is autophosphorylated at a histidine residue and transfers its phosphate group to an aspartate residue of HssR. HssR/HssS activates the expression of hrtAB, an efflux pump, in response to extracellular heme, hemin, hemoglobin or blood. The protein is Heme sensor protein HssS (hssS) of Staphylococcus haemolyticus (strain JCSC1435).